Consider the following 380-residue polypeptide: Queuine tRNA-ribosyltransferase (380 aa).

Catalysis depends on Asp-96, which acts as the Proton acceptor. Residues 96-100, Asp-150, Gln-193, and Gly-220 contribute to the substrate site; that span reads DSGGF. The tract at residues 251–257 is RNA binding; sequence GVGAPDS. Catalysis depends on Asp-270, which acts as the Nucleophile. The tract at residues 275 to 279 is RNA binding; important for wobble base 34 recognition; sequence TRIAR. Zn(2+) contacts are provided by Cys-308, Cys-310, Cys-313, and His-339.

The protein belongs to the queuine tRNA-ribosyltransferase family. In terms of assembly, homodimer. Within each dimer, one monomer is responsible for RNA recognition and catalysis, while the other monomer binds to the replacement base PreQ1. Zn(2+) is required as a cofactor.

It carries out the reaction 7-aminomethyl-7-carbaguanine + guanosine(34) in tRNA = 7-aminomethyl-7-carbaguanosine(34) in tRNA + guanine. It participates in tRNA modification; tRNA-queuosine biosynthesis. Catalyzes the base-exchange of a guanine (G) residue with the queuine precursor 7-aminomethyl-7-deazaguanine (PreQ1) at position 34 (anticodon wobble position) in tRNAs with GU(N) anticodons (tRNA-Asp, -Asn, -His and -Tyr). Catalysis occurs through a double-displacement mechanism. The nucleophile active site attacks the C1' of nucleotide 34 to detach the guanine base from the RNA, forming a covalent enzyme-RNA intermediate. The proton acceptor active site deprotonates the incoming PreQ1, allowing a nucleophilic attack on the C1' of the ribose to form the product. After dissociation, two additional enzymatic reactions on the tRNA convert PreQ1 to queuine (Q), resulting in the hypermodified nucleoside queuosine (7-(((4,5-cis-dihydroxy-2-cyclopenten-1-yl)amino)methyl)-7-deazaguanosine). This is Queuine tRNA-ribosyltransferase from Streptococcus pneumoniae (strain P1031).